The sequence spans 1643 residues: DNA-directed RNA polymerase subunit beta' (1643 aa).

The Zn(2+) site is built by cysteine 64, cysteine 66, cysteine 79, and cysteine 82. Positions 684, 686, and 688 each coordinate Mg(2+). The Zn(2+) site is built by cysteine 1046, cysteine 1239, cysteine 1246, and cysteine 1249.

The protein belongs to the RNA polymerase beta' chain family. As to quaternary structure, the RNAP catalytic core consists of 2 alpha, 1 beta, 1 beta' and 1 omega subunit. When a sigma factor is associated with the core the holoenzyme is formed, which can initiate transcription. Requires Mg(2+) as cofactor. Zn(2+) serves as cofactor.

The enzyme catalyses RNA(n) + a ribonucleoside 5'-triphosphate = RNA(n+1) + diphosphate. DNA-dependent RNA polymerase catalyzes the transcription of DNA into RNA using the four ribonucleoside triphosphates as substrates. The sequence is that of DNA-directed RNA polymerase subunit beta' from Petrotoga mobilis (strain DSM 10674 / SJ95).